The sequence spans 840 residues: N-acetyltransferase ESCO1 (840 aa).

Positions 1–25 (MMSIQEKSKENSSKVTKKSDDKNSE) are enriched in basic and acidic residues. Residues 1–188 (MMSIQEKSKE…VLEVKSDSKE (188 aa)) are disordered. 3 stretches are compositionally biased toward polar residues: residues 46 to 58 (KSQA…SKIN), 65 to 74 (RMSTRSSKAA), and 81 to 96 (KSIN…YSQE). Positions 131-140 (VSRRSLRSRE) are enriched in basic and acidic residues. The span at 141 to 153 (IQGQVQAVKQSLP) shows a compositional bias: polar residues. Over residues 161–170 (SSTQSKSNKT) the composition is skewed to low complexity. Positions 178 to 188 (KVLEVKSDSKE) are enriched in basic and acidic residues. The residue at position 200 (serine 200) is a Phosphoserine. 2 disordered regions span residues 221–300 (TQGS…KSKR) and 318–338 (NVEV…KPTE). Residues 267–278 (HTQVNTNTTLPK) show a composition bias toward polar residues. A compositionally biased stretch (basic and acidic residues) spans 319–338 (VEVKKESSQMESVKEEKPTE). A Glycyl lysine isopeptide (Lys-Gly) (interchain with G-Cter in SUMO2) cross-link involves residue lysine 332. At serine 412 the chain carries Phosphoserine. 2 disordered regions span residues 486-505 (ANEI…HSFD) and 542-582 (TGEN…KCNS). A compositionally biased stretch (polar residues) spans 551–565 (APQQHSILSNQTSKS). Residues 617–641 (VSCNVCGMLYTASNPEDETQHLLFH) form a CCHH-type zinc finger. Residues 772–774 (IWV), 780–785 (RKKIAS), and 812–814 (TPD) contribute to the acetyl-CoA site.

Belongs to the acetyltransferase family. ECO subfamily. The subunit structure is controversial. Monomer. Homodimer. Phosphorylated during mitosis, when associated with chromosomes. Widely expressed. Expressed in heart, brain, liver, placenta, lung, kidney and pancreas. Highly expressed in muscle.

It is found in the nucleus. Its subcellular location is the chromosome. It catalyses the reaction L-lysyl-[protein] + acetyl-CoA = N(6)-acetyl-L-lysyl-[protein] + CoA + H(+). Its function is as follows. Acetyltransferase required for the establishment of sister chromatid cohesion. Couples the processes of cohesion and DNA replication to ensure that only sister chromatids become paired together. In contrast to the structural cohesins, the deposition and establishment factors are required only during S phase. Acts by mediating the acetylation of cohesin component SMC3. In Homo sapiens (Human), this protein is N-acetyltransferase ESCO1 (ESCO1).